We begin with the raw amino-acid sequence, 409 residues long: Serine/threonine transporter SstT (409 aa).

The next 9 membrane-spanning stretches (helical) occupy residues 15 to 35 (LSLV…ALLA), 49 to 69 (FVSA…MASI), 82 to 102 (PILV…VIAS), 142 to 162 (ALMN…GVAI), 193 to 213 (LGIF…ALLG), 218 to 238 (LAVL…LIVF), 301 to 321 (GAAI…GIAV), 331 to 351 (VVAA…LLLI), and 357 to 377 (LFGI…IIGV).

It belongs to the dicarboxylate/amino acid:cation symporter (DAACS) (TC 2.A.23) family.

It localises to the cell inner membrane. It catalyses the reaction L-serine(in) + Na(+)(in) = L-serine(out) + Na(+)(out). The catalysed reaction is L-threonine(in) + Na(+)(in) = L-threonine(out) + Na(+)(out). Involved in the import of serine and threonine into the cell, with the concomitant import of sodium (symport system). In Pseudomonas fluorescens (strain ATCC BAA-477 / NRRL B-23932 / Pf-5), this protein is Serine/threonine transporter SstT.